The chain runs to 574 residues: Pescadillo homolog (574 aa).

The segment at 289-312 is disordered; sequence PSEPNDDTEVDEFPADPENAGLEE. Acidic residues predominate over residues 292-303; the sequence is PNDDTEVDEFPA. Residues 323 to 416 enclose the BRCT domain; it reads KHKSLFVGLK…LLLPVEDYFP (94 aa). The segment at 452–486 is disordered; the sequence is LGLDEEDDDDDDDDEEEDDDDDEEEEDKKLRQLEN. Positions 453–477 are enriched in acidic residues; the sequence is GLDEEDDDDDDDDEEEDDDDDEEEE.

Belongs to the pescadillo family. In terms of assembly, component of the PeBoW complex, composed of bop1, pes1 and wdr12. The complex is held together by bop1, which interacts with pes1 via its N-terminal domain and with wdr12 via a high-affinity interaction between the seven-bladed beta-propeller domains of the 2 proteins. The PeBoW complex associates with the 66S pre-ribosome.

It is found in the nucleus. The protein localises to the nucleolus. Its subcellular location is the nucleoplasm. Component of the PeBoW complex, which is required for maturation of 28S and 5.8S ribosomal RNAs and formation of the 60S ribosome. Required for neural crest migration and eye development. The sequence is that of Pescadillo homolog (pes1) from Xenopus laevis (African clawed frog).